A 1502-amino-acid chain; its full sequence is G patch domain-containing protein 8 (1502 aa).

One can recognise a G-patch domain in the interval 40–86; that stretch reads SDNIGHRLLQKHGWKLGQGLGKSLQGRTDPIPIVVKYDVMGMGRMEM. A coiled-coil region spans residues 89–124; it reads DYAEDATERRRVLEVEKEDTEELRQKYKDYVDKEKA. A C2H2-type zinc finger spans residues 136-160; it reads FYCELCDKQYQKHQEFDNHINSYDH. The segment at 172 to 251 is disordered; sequence REFARNVSSR…GATASCGLGS (80 aa). Residues 182 to 206 are compositionally biased toward basic and acidic residues; the sequence is SRKDEKKQEKALRRLHELAEQRKQA. Positions 223 to 233 are enriched in acidic residues; it reads VDEEGGEDDKD. Lys311 is covalently cross-linked (Glycyl lysine isopeptide (Lys-Gly) (interchain with G-Cter in SUMO2)). Basic and acidic residues-rich tracts occupy residues 323 to 339 and 424 to 436; these read AEEGTSEDGTKPDEKSS and NTTHPKNAPESKK. Disordered stretches follow at residues 323-391 and 419-541; these read AEEG…ATEP and QMDG…FPVL. The segment covering 459 to 472 has biased composition (polar residues); that stretch reads SEVSEQPKETSMTE. Residue Lys479 is modified to N6-acetyllysine. Position 491 is a phosphoserine (Ser491). A compositionally biased stretch (polar residues) spans 491 to 519; that stretch reads SDQSLESHSQKVSETQMCESNSSKETSLA. A Glycyl lysine isopeptide (Lys-Gly) (interchain with G-Cter in SUMO2) cross-link involves residue Lys577. 2 stretches are compositionally biased toward basic and acidic residues: residues 579–623 and 653–670; these read SRNK…EKIV and SETEDTGRSLPSKKERSG. The interval 579–1301 is disordered; sequence SRNKDARTKG…ESTDGAEDAS (723 aa). Residue Ser653 is modified to Phosphoserine. Residues 671–692 show a composition bias toward basic residues; sequence KSHRHKKKKKHKKSSKHKRKHK. Residues 693–707 are compositionally biased toward basic and acidic residues; sequence ADTEEKSSKAESGEK. Positions 708–720 are enriched in basic residues; sequence SKKRKKRKRKKNK. The segment covering 733-743 has biased composition (pro residues); that stretch reads PEPPGSGSPAP. Phosphoserine is present on residues Ser738, Ser740, and Ser758. Positions 750-772 are enriched in basic and acidic residues; sequence AQDDSQRRSLPAEEGSSGKKDEG. Basic residues-rich tracts occupy residues 799-809 and 852-867; these read AGTKRSSRSSH and SRSRSGRRHSSHRSSR. The segment covering 868–896 has biased composition (low complexity); sequence RSYSSSSDASSDQSCYSRQRSYSDDSYSD. Phosphoserine is present on residues Ser911 and Ser914. Residues 919–928 are compositionally biased toward basic residues; the sequence is SKHRSKRHKY. 5 positions are modified to phosphoserine: Ser981, Ser1009, Ser1014, Ser1033, and Ser1035. Residues 1010–1027 are compositionally biased toward basic and acidic residues; that stretch reads WGHESPEERHSGRRDFIR. A compositionally biased stretch (basic and acidic residues) spans 1042-1059; sequence GRGEGPGKKDDGRGDDSK. Position 1081 is a phosphoserine (Ser1081). Composition is skewed to basic and acidic residues over residues 1093–1108 and 1159–1171; these read LLEKIQSRKVERKPSV and KKCEESGLERGEE. Lys1105 is covalently cross-linked (Glycyl lysine isopeptide (Lys-Gly) (interchain with G-Cter in SUMO2)). Ser1107 bears the Phosphoserine mark. The residue at position 1175 (Ser1175) is a Phosphoserine.

This is G patch domain-containing protein 8 (GPATCH8) from Homo sapiens (Human).